The following is an 84-amino-acid chain: Small ribosomal subunit protein bS18 (84 aa).

Belongs to the bacterial ribosomal protein bS18 family. Part of the 30S ribosomal subunit. Forms a tight heterodimer with protein bS6.

Functionally, binds as a heterodimer with protein bS6 to the central domain of the 16S rRNA, where it helps stabilize the platform of the 30S subunit. This is Small ribosomal subunit protein bS18 from Methylorubrum extorquens (strain CM4 / NCIMB 13688) (Methylobacterium extorquens).